The primary structure comprises 388 residues: Protein-glutamate methylesterase/protein-glutamine glutaminase 1 (388 aa).

The region spanning 4 to 121 (QVLVVDDSSF…ATNKDEAIRL (118 aa)) is the Response regulatory domain. Residue D55 is modified to 4-aspartylphosphate. The disordered stretch occupies residues 149 to 190 (SARAGLSSTSPTLGSSTLGRSPASGLASSASRNSPTVSTPAS). Over residues 153-169 (GLSSTSPTLGSSTLGRS) the composition is skewed to low complexity. Residues 174 to 189 (LASSASRNSPTVSTPA) are compositionally biased toward polar residues. The CheB-type methylesterase domain maps to 188–388 (PASAIRASGK…EAILKESGRG (201 aa)). Active-site residues include S207, H234, and D330.

Belongs to the CheB family. In terms of processing, phosphorylated by CheA. Phosphorylation of the N-terminal regulatory domain activates the methylesterase activity.

It localises to the cytoplasm. It carries out the reaction [protein]-L-glutamate 5-O-methyl ester + H2O = L-glutamyl-[protein] + methanol + H(+). The catalysed reaction is L-glutaminyl-[protein] + H2O = L-glutamyl-[protein] + NH4(+). Functionally, involved in chemotaxis. Part of a chemotaxis signal transduction system that modulates chemotaxis in response to various stimuli. Catalyzes the demethylation of specific methylglutamate residues introduced into the chemoreceptors (methyl-accepting chemotaxis proteins or MCP) by CheR. Also mediates the irreversible deamidation of specific glutamine residues to glutamic acid. The protein is Protein-glutamate methylesterase/protein-glutamine glutaminase 1 of Shewanella denitrificans (strain OS217 / ATCC BAA-1090 / DSM 15013).